Reading from the N-terminus, the 210-residue chain is MPDTVCRPPRLILASSSRYRRALLERLGIPFDVVSPDLDETPHDGETPAATALRLAAAKARAVAATIDAPDGVLVIGSDQVATFDGLQIGKPGTHERALAQLVSMQGREVEFHSALCLYDSRTGEAQVEDIVTHVRFRSLPEAELDAYLRAETPYDVAGSAKSEGLGIALLDAIDSNDPTALVGLPLIALTRMLRAADYPLFATTRGDRA.

D79 (proton acceptor) is an active-site residue.

The protein belongs to the Maf family. YceF subfamily. Requires a divalent metal cation as cofactor.

The protein localises to the cytoplasm. The catalysed reaction is N(7)-methyl-GTP + H2O = N(7)-methyl-GMP + diphosphate + H(+). In terms of biological role, nucleoside triphosphate pyrophosphatase that hydrolyzes 7-methyl-GTP (m(7)GTP). May have a dual role in cell division arrest and in preventing the incorporation of modified nucleotides into cellular nucleic acids. This Burkholderia lata (strain ATCC 17760 / DSM 23089 / LMG 22485 / NCIMB 9086 / R18194 / 383) protein is 7-methyl-GTP pyrophosphatase.